The following is a 433-amino-acid chain: Protein CLP1 homolog (433 aa).

Residues E22, R61, and D128–T133 each bind ATP.

The protein belongs to the Clp1 family. Clp1 subfamily.

It localises to the nucleus. Functionally, required for endonucleolytic cleavage during polyadenylation-dependent pre-mRNA 3'-end formation. This is Protein CLP1 homolog from Brugia malayi (Filarial nematode worm).